The sequence spans 255 residues: Staphylococcal secretory antigen ssaA1 (255 aa).

Residues 1-26 form the signal peptide; the sequence is MKKIVTATIATAGLATIAFAGHDAQA. A run of 3 repeats spans residues 75 to 78, 88 to 91, and 98 to 101. The tract at residues 75–101 is 3 X 4 AA repeats of Y-N-N-Y; sequence YNNYNTYSYNNASYNNYYNHSYQYNNY. The Peptidase C51 domain maps to 134–255; sequence AAPSSNGRSI…NQAGSYNFIH (122 aa).

Its subcellular location is the secreted. Not known; immunogenic protein. The chain is Staphylococcal secretory antigen ssaA1 (ssaA1) from Staphylococcus aureus (strain MW2).